The primary structure comprises 430 residues: Probable FAD-dependent monooxygenase (430 aa).

Positions 1–23 (MGSTSTPPHVLIIGAGITGLALA) are cleaved as a signal peptide. 9 to 37 (HVLIIGAGITGLALAQALRKHGVSFAVYE) provides a ligand contact to FAD. Residues Asn130 and Asn151 are each glycosylated (N-linked (GlcNAc...) asparagine). 307–330 (LEDWPTPPKGSWSNLGGTATLVGD) is an FAD binding site.

The cofactor is FAD.

The sequence is that of Probable FAD-dependent monooxygenase from Arthroderma benhamiae (strain ATCC MYA-4681 / CBS 112371) (Trichophyton mentagrophytes).